A 163-amino-acid polypeptide reads, in one-letter code: Retinoic acid receptor responder protein 2 (163 aa).

The signal sequence occupies residues 1–20 (MRRLLIPLALWLGAVGVGVA). 3 disulfide bridges follow: cysteine 77–cysteine 87, cysteine 98–cysteine 117, and cysteine 101–cysteine 135. The propeptide occupies 158–163 (KALPRS).

Secreted in an inactive precursor form, prochemerin, which is proteolytically processed by a variety of extracellular proteases to generate forms with differing levels of bioactivity. For example, the removal of six amino acids results in chemerin-157, which exhibits the highest activity, while removal of seven amino acids results in chemerin-156 which has slightly less activity. Some proteases are able to cleave at more than one site and chemerin forms may be sequentially processed by different enzymes to modulate activity levels. The coordinated expression and activity of chemerin-modifying enzymes is essential for regulating its bioactivation, inactivation and, consequently, biological function. Cathepsin G cleaves seven C-terminal amino acids from prochemerin (chemerin-156), elastase is able to cleave six (chemerin-157), eight (chemerin-155) or eleven (chemerin-152), plasmin cleaves five amino acids (chemerin-158), and tryptase cleaves five (chemerin-158) or eight (chemerin-155). Multiple cleavages might be required to fully activate chemerin, with an initial tryptase cleavage resulting in chemerin with low activity (chemerin-158), and a second cleavage by carboxypeptidase N or B producing highly active chemerin (chemerin-157). In terms of tissue distribution, expressed at the highest levels in placenta, liver, and white adipose tissue (WAT), and to a lesser extent in many other tissues such as lung, brown adipose tissue, heart, ovary, kidney, skeletal muscle and pancreas. Within WAT, expression is enriched in adipocytes as compared to the stromal vascular fraction. Expression and secretion increases dramatically with adipogenesis. Highly expressed in skin (basal and suprabasal layers of the epidermis, hair follicles and endothelial cells). Expression is elevated in numerous metabolic and inflammatory diseases including psoriasis, obesity, type 2 diabetes, metabolic syndrome and cardiovascular disease.

The protein localises to the secreted. Its function is as follows. Adipocyte-secreted protein (adipokine) that regulates adipogenesis, metabolism and inflammation through activation of the chemokine-like receptor 1 (CMKLR1). Also acts as a ligand for CMKLR2. Can also bind to C-C chemokine receptor-like 2 (CCRL2), but with a lower affinity than it does to CMKLR1 or CMKLR2. Positively regulates adipocyte differentiation, modulates the expression of adipocyte genes involved in lipid and glucose metabolism and might play a role in angiogenesis, a process essential for the expansion of white adipose tissue. Also acts as a pro-inflammatory adipokine, causing an increase in secretion of pro-inflammatory and prodiabetic adipokines, which further impair adipose tissue metabolic function and have negative systemic effects including impaired insulin sensitivity, altered glucose and lipid metabolism, and a decrease in vascular function in other tissues. Can have both pro- and anti-inflammatory properties depending on the modality of enzymatic cleavage by different classes of proteases. Acts as a chemotactic factor for leukocyte populations expressing CMKLR1, particularly immature plasmacytoid dendritic cells, but also immature myeloid DCs, macrophages and natural killer cells. Exerts an anti-inflammatory role by preventing TNF/TNFA-induced VCAM1 expression and monocytes adhesion in vascular endothelial cells. The effect is mediated via inhibiting activation of NF-kappa-B and CRK/p38 through stimulation of AKT1/NOS3 signaling and nitric oxide production. Its dual role in inflammation and metabolism might provide a link between chronic inflammation and obesity, as well as obesity-related disorders such as type 2 diabetes and cardiovascular disease. Exhibits an antimicrobial function in the skin. The chain is Retinoic acid receptor responder protein 2 (RARRES2) from Homo sapiens (Human).